A 255-amino-acid chain; its full sequence is Type III pantothenate kinase (255 aa).

7–14 (DVGNTRLK) provides a ligand contact to ATP. Substrate-binding positions include Y96 and 103 to 106 (GADR). Catalysis depends on D105, which acts as the Proton acceptor. T133 provides a ligand contact to ATP. T183 is a binding site for substrate.

Belongs to the type III pantothenate kinase family. In terms of assembly, homodimer. NH4(+) is required as a cofactor. The cofactor is K(+).

The protein resides in the cytoplasm. The catalysed reaction is (R)-pantothenate + ATP = (R)-4'-phosphopantothenate + ADP + H(+). The protein operates within cofactor biosynthesis; coenzyme A biosynthesis; CoA from (R)-pantothenate: step 1/5. In terms of biological role, catalyzes the phosphorylation of pantothenate (Pan), the first step in CoA biosynthesis. This chain is Type III pantothenate kinase, found in Polaromonas sp. (strain JS666 / ATCC BAA-500).